Here is a 202-residue protein sequence, read N- to C-terminus: Transcriptional regulator GfcR 2 (202 aa).

Belongs to the purine/pyrimidine phosphoribosyltransferase family. GfcR subfamily.

The polypeptide is Transcriptional regulator GfcR 2 (Methanosarcina barkeri (strain Fusaro / DSM 804)).